A 425-amino-acid polypeptide reads, in one-letter code: Enolase (425 aa).

Q163 is a (2R)-2-phosphoglycerate binding site. E205 functions as the Proton donor in the catalytic mechanism. Positions 242, 286, and 313 each coordinate Mg(2+). (2R)-2-phosphoglycerate-binding residues include K338, R367, S368, and K389. K338 functions as the Proton acceptor in the catalytic mechanism.

It belongs to the enolase family. It depends on Mg(2+) as a cofactor.

Its subcellular location is the cytoplasm. The protein resides in the secreted. It is found in the cell surface. It catalyses the reaction (2R)-2-phosphoglycerate = phosphoenolpyruvate + H2O. Its pathway is carbohydrate degradation; glycolysis; pyruvate from D-glyceraldehyde 3-phosphate: step 4/5. In terms of biological role, catalyzes the reversible conversion of 2-phosphoglycerate (2-PG) into phosphoenolpyruvate (PEP). It is essential for the degradation of carbohydrates via glycolysis. The polypeptide is Enolase (Helicobacter hepaticus (strain ATCC 51449 / 3B1)).